We begin with the raw amino-acid sequence, 293 residues long: Amine sulfotransferase (293 aa).

46 to 51 contacts 3'-phosphoadenylyl sulfate; sequence KSGTIW. His-101 acts as the Proton acceptor in catalysis. 3'-phosphoadenylyl sulfate is bound by residues Arg-123, Ser-131, 220–225, and 252–254; these read ATFQKM and RKG.

The protein belongs to the sulfotransferase 1 family.

The protein resides in the cytoplasm. It carries out the reaction a primary amine + 3'-phosphoadenylyl sulfate = a sulfamate + adenosine 3',5'-bisphosphate + 2 H(+). Its function is as follows. Sulfotransferase that utilizes 3'-phospho-5'-adenylyl sulfate (PAPS) as sulfonate donor to catalyze the N-sulfonation of amines. This Mus musculus (Mouse) protein is Amine sulfotransferase (Sult3a1).